The following is a 202-amino-acid chain: GTP cyclohydrolase-2 (202 aa).

49–53 contributes to the GTP binding site; that stretch reads RIHSE. 3 residues coordinate Zn(2+): cysteine 54, cysteine 65, and cysteine 67. GTP contacts are provided by residues glutamine 70, 92-94, and threonine 114; that span reads EGR. Aspartate 126 functions as the Proton acceptor in the catalytic mechanism. The Nucleophile role is filled by arginine 128. GTP is bound by residues threonine 149 and lysine 154.

Belongs to the GTP cyclohydrolase II family. Zn(2+) serves as cofactor.

The catalysed reaction is GTP + 4 H2O = 2,5-diamino-6-hydroxy-4-(5-phosphoribosylamino)-pyrimidine + formate + 2 phosphate + 3 H(+). The protein operates within cofactor biosynthesis; riboflavin biosynthesis; 5-amino-6-(D-ribitylamino)uracil from GTP: step 1/4. Functionally, catalyzes the conversion of GTP to 2,5-diamino-6-ribosylamino-4(3H)-pyrimidinone 5'-phosphate (DARP), formate and pyrophosphate. The sequence is that of GTP cyclohydrolase-2 from Shewanella frigidimarina (strain NCIMB 400).